A 337-amino-acid chain; its full sequence is MSFTPANRAYPYTRLRRNRRDDFSRRLVRENVLTVDDLILPVFVLDGVNQRESIPSMPGVERLSIDQLLIEAEEWVALGIPALALFPVTPVEKKSLDAAEAYNPEGIAQRATRALRERFPELGIITDVALDPFTTHGQDGILDDDGYVLNDVSIDVLVRQALSHAEAGAQVVAPSDMMDGRIGAIREALESAGHTNVRIMAYSAKYASAYYGPFRDAVGSASNLGKGNKATYQMDPANSDEALHEVAADLAEGADMVMVKPGMPYLDIVRRVKDEFRAPTFVYQVSGEYAMHMGAIQNGWLAESVILESLTAFKRAGADGILTYFAKQAAEQLRRGR.

Lys205 serves as the catalytic Schiff-base intermediate with substrate. 2 residues coordinate 5-aminolevulinate: Arg215 and Lys229. A Mg(2+)-binding site is contributed by Glu245. The active-site Schiff-base intermediate with substrate is the Lys260. 5-aminolevulinate is bound by residues Ser286 and Tyr324.

It belongs to the ALAD family. As to quaternary structure, homooctamer; formed by oligomerization of dimers. The cofactor is Mg(2+).

It catalyses the reaction 2 5-aminolevulinate = porphobilinogen + 2 H2O + H(+). It functions in the pathway porphyrin-containing compound metabolism; protoporphyrin-IX biosynthesis; coproporphyrinogen-III from 5-aminolevulinate: step 1/4. Stimulated by magnesium ions. Its function is as follows. Catalyzes an early step in the biosynthesis of tetrapyrroles. Binds two molecules of 5-aminolevulinate per subunit, each at a distinct site, and catalyzes their condensation to form porphobilinogen. This Pseudomonas aeruginosa (strain ATCC 15692 / DSM 22644 / CIP 104116 / JCM 14847 / LMG 12228 / 1C / PRS 101 / PAO1) protein is Delta-aminolevulinic acid dehydratase (hemB).